Here is a 257-residue protein sequence, read N- to C-terminus: Putative hydro-lyase Bcen2424_3550 (257 aa).

It belongs to the D-glutamate cyclase family.

In Burkholderia cenocepacia (strain HI2424), this protein is Putative hydro-lyase Bcen2424_3550.